Consider the following 308-residue polypeptide: Adult enhancer factor 1 (308 aa).

Disordered regions lie at residues A50–F94 and Q123–T143. Low complexity predominate over residues Q56 to Q76. The segment covering P81–L90 has biased composition (pro residues). 4 consecutive C2H2-type zinc fingers follow at residues F184–H206, Y212–H234, Y240–H262, and F268–H290.

As to expression, found in all tissues examined including the ovary and the fat body.

Its subcellular location is the nucleus. In terms of biological role, transcriptional repressor that binds specifically to fat body-specific enhancers, namely the adult ADH enhancer (AAE) and the enhancer that controls yolk protein gene expression. This is Adult enhancer factor 1 (Aef1) from Drosophila melanogaster (Fruit fly).